The chain runs to 333 residues: Receptor polysaccharide phosphotransferase WefC (333 aa).

The protein belongs to the stealth family.

In terms of biological role, part of the type 2Gn receptor polysaccharide (RPS) biosynthesis locus. Essential for cell surface RPS production, and for synthesis of the host-like GalNAc beta 1-3Gal (Gn) motif of the RPS. Probably encodes a 1-3Gal alpha transferase. The sequence is that of Receptor polysaccharide phosphotransferase WefC (wefC) from Streptococcus gordonii.